The primary structure comprises 123 residues: UPF0102 protein Cbei_1183 (123 aa).

The protein belongs to the UPF0102 family.

The polypeptide is UPF0102 protein Cbei_1183 (Clostridium beijerinckii (strain ATCC 51743 / NCIMB 8052) (Clostridium acetobutylicum)).